The sequence spans 367 residues: MSIDVTDYRDIFLNDRPLMDARAPVEFHKGAFPGAVNLPLMNDIERQRVGTCYKHHGQQAAIELGHQLVSGPVKEERIQAWAEFARTHPEGYLYCFRGGLRSQIVQQWLKSEAGVDYPRIGGGYKALRGFLIDTLESALTDCDFVLLGGMTGTGKTEVLAQLRNSVDLEGHANHRGSSFGKRATGQPSNIDFENRLAIDLLKKRAAGIDQFVLEDESRVVGSCALPLPLYQGMQQYPMVWLEDRFEQRVERILRDYVVDLSAEFQAVHGEEGFGRFCERLLESLDNVHKRLGGERHRRMRVLMEEALAEQGRSGAVELHRAWIEGLLREYYDPMYVFQREKKGGRIEFAGERQAVIEYLRQRGKSQA.

One can recognise a Rhodanese domain in the interval 12–136 (FLNDRPLMDA…LRGFLIDTLE (125 aa)). The active-site S-selanylcysteine intermediate is cysteine 95.

It belongs to the SelU family. In terms of assembly, monomer.

It carries out the reaction 5-methylaminomethyl-2-thiouridine(34) in tRNA + selenophosphate + (2E)-geranyl diphosphate + H2O + H(+) = 5-methylaminomethyl-2-selenouridine(34) in tRNA + (2E)-thiogeraniol + phosphate + diphosphate. The catalysed reaction is 5-methylaminomethyl-2-thiouridine(34) in tRNA + (2E)-geranyl diphosphate = 5-methylaminomethyl-S-(2E)-geranyl-thiouridine(34) in tRNA + diphosphate. The enzyme catalyses 5-methylaminomethyl-S-(2E)-geranyl-thiouridine(34) in tRNA + selenophosphate + H(+) = 5-methylaminomethyl-2-(Se-phospho)selenouridine(34) in tRNA + (2E)-thiogeraniol. It catalyses the reaction 5-methylaminomethyl-2-(Se-phospho)selenouridine(34) in tRNA + H2O = 5-methylaminomethyl-2-selenouridine(34) in tRNA + phosphate. Functionally, involved in the post-transcriptional modification of the uridine at the wobble position (U34) of tRNA(Lys), tRNA(Glu) and tRNA(Gln). Catalyzes the conversion of 2-thiouridine (S2U-RNA) to 2-selenouridine (Se2U-RNA). Acts in a two-step process involving geranylation of 2-thiouridine (S2U) to S-geranyl-2-thiouridine (geS2U) and subsequent selenation of the latter derivative to 2-selenouridine (Se2U) in the tRNA chain. The polypeptide is tRNA 2-selenouridine synthase (Pseudomonas fluorescens (strain Pf0-1)).